The following is a 333-amino-acid chain: D-lactate dehydrogenase (333 aa).

NAD(+) is bound by residues 156-157 (HI), aspartate 176, 207-208 (VP), asparagine 213, 234-236 (VSR), and aspartate 260. The active site involves arginine 236. Residue glutamate 265 is part of the active site. The active-site Proton donor is the histidine 297.

It belongs to the D-isomer specific 2-hydroxyacid dehydrogenase family. As to quaternary structure, homodimer.

It catalyses the reaction (R)-lactate + NAD(+) = pyruvate + NADH + H(+). The polypeptide is D-lactate dehydrogenase (ldhA) (Lactobacillus delbrueckii subsp. bulgaricus (strain ATCC 11842 / DSM 20081 / BCRC 10696 / JCM 1002 / NBRC 13953 / NCIMB 11778 / NCTC 12712 / WDCM 00102 / Lb 14)).